Here is a 449-residue protein sequence, read N- to C-terminus: Glutamyl-tRNA reductase (449 aa).

Residues 58 to 61, serine 121, 126 to 128, and glutamine 132 each bind substrate; these read TCNR and ETQ. Cysteine 59 functions as the Nucleophile in the catalytic mechanism. 203 to 208 contributes to the NADP(+) binding site; the sequence is GLGEMA.

It belongs to the glutamyl-tRNA reductase family. Homodimer.

The enzyme catalyses (S)-4-amino-5-oxopentanoate + tRNA(Glu) + NADP(+) = L-glutamyl-tRNA(Glu) + NADPH + H(+). It participates in porphyrin-containing compound metabolism; protoporphyrin-IX biosynthesis; 5-aminolevulinate from L-glutamyl-tRNA(Glu): step 1/2. In terms of biological role, catalyzes the NADPH-dependent reduction of glutamyl-tRNA(Glu) to glutamate 1-semialdehyde (GSA). In Helicobacter pylori (strain HPAG1), this protein is Glutamyl-tRNA reductase.